The sequence spans 122 residues: uncharacterized protein (122 aa).

The region spanning 10 to 120 is the HIT domain; it reads VFARILRGEI…AGRRLGPMIT (111 aa). Positions 104-108 match the Histidine triad motif motif; that stretch reads HLHIH.

This is an uncharacterized protein from Azospirillum brasilense.